The primary structure comprises 467 residues: L-seryl-tRNA(Sec) selenium transferase (467 aa).

At Lys-298 the chain carries N6-(pyridoxal phosphate)lysine.

The protein belongs to the SelA family. It depends on pyridoxal 5'-phosphate as a cofactor.

The protein resides in the cytoplasm. The enzyme catalyses L-seryl-tRNA(Sec) + selenophosphate + H(+) = L-selenocysteinyl-tRNA(Sec) + phosphate. It participates in aminoacyl-tRNA biosynthesis; selenocysteinyl-tRNA(Sec) biosynthesis; selenocysteinyl-tRNA(Sec) from L-seryl-tRNA(Sec) (bacterial route): step 1/1. Its function is as follows. Converts seryl-tRNA(Sec) to selenocysteinyl-tRNA(Sec) required for selenoprotein biosynthesis. The polypeptide is L-seryl-tRNA(Sec) selenium transferase (Alkaliphilus metalliredigens (strain QYMF)).